Consider the following 199-residue polypeptide: N-(5'-phosphoribosyl)anthranilate isomerase (199 aa).

This sequence belongs to the TrpF family.

It carries out the reaction N-(5-phospho-beta-D-ribosyl)anthranilate = 1-(2-carboxyphenylamino)-1-deoxy-D-ribulose 5-phosphate. It functions in the pathway amino-acid biosynthesis; L-tryptophan biosynthesis; L-tryptophan from chorismate: step 3/5. This is N-(5'-phosphoribosyl)anthranilate isomerase from Streptococcus pneumoniae serotype 4 (strain ATCC BAA-334 / TIGR4).